The following is a 182-amino-acid chain: ADP-ribosylation factor-like protein 3 (182 aa).

The N-myristoyl glycine moiety is linked to residue G2. S5 carries the phosphoserine modification. Residues 24–31, T48, 67–71, G70, 126–129, and 159–161 contribute to the GTP site; these read GLDNAGKT, DIGGQ, NKQD, and SAL. Mg(2+) contacts are provided by T31 and T48.

Belongs to the small GTPase superfamily. Arf family. Found in a complex with ARL3, RP2 and UNC119 (or UNC119B); RP2 induces hydrolysis of GTP ARL3 in the complex, leading to the release of UNC119 (or UNC119B). Interacts with RP2; interaction is direct and stimulated with the activated GTP-bound form of ARL3. Interacts with SYS1. The GTP-bound form interacts with ARL2BP and PDE6D. Microtubule-associated protein. May interact with GOLGA4. Interacts with GGA1; the interaction recruits PKD1:PKD2 complex to trans-Golgi network and is required for ciliary targeting of PKD1:PKD2 complex. Interacts with DNAAF9. Expressed in the retina. Strongly expressed in connecting cilium, the myoid region of the inner segments (IS) and in cone photoreceptors (at protein level).

The protein localises to the golgi apparatus membrane. It is found in the cytoplasm. The protein resides in the cytoskeleton. It localises to the spindle. Its subcellular location is the nucleus. The protein localises to the microtubule organizing center. It is found in the centrosome. The protein resides in the cell projection. It localises to the cilium. In terms of biological role, small GTP-binding protein which cycles between an inactive GDP-bound and an active GTP-bound form, and the rate of cycling is regulated by guanine nucleotide exchange factors (GEF) and GTPase-activating proteins (GAP). Required for normal cytokinesis and cilia signaling. Requires assistance from GTPase-activating proteins (GAPs) like RP2 and PDE6D, in order to cycle between inactive GDP-bound and active GTP-bound forms. Required for targeting proteins to the cilium, including myristoylated NPHP3 and prenylated INPP5E. Targets NPHP3 to the ciliary membrane by releasing myristoylated NPHP3 from UNC119B cargo adapter into the cilium. Required for PKD1:PKD2 complex targeting from the trans-Golgi network to the cilium. In Homo sapiens (Human), this protein is ADP-ribosylation factor-like protein 3 (ARL3).